The sequence spans 380 residues: Cytochrome b (380 aa).

4 consecutive transmembrane segments (helical) span residues 33–53 (FGSL…FLAM), 77–98 (WLIR…YLHV), 113–133 (WNIG…GYVL), and 178–198 (FFAF…LHLL). Positions 83 and 97 each coordinate heme b. Heme b is bound by residues His182 and His196. His201 contributes to the a ubiquinone binding site. Helical transmembrane passes span 226–246 (YKDL…ALFS), 288–308 (LGGV…PLLH), 320–340 (LTQI…WIGG), and 347–367 (FITV…IFIP).

Belongs to the cytochrome b family. As to quaternary structure, the cytochrome bc1 complex contains 3 respiratory subunits (MT-CYB, CYC1 and UQCRFS1), 2 core proteins (UQCRC1 and UQCRC2) and probably 6 low-molecular weight proteins. It depends on heme b as a cofactor.

Its subcellular location is the mitochondrion inner membrane. Its function is as follows. Component of the ubiquinol-cytochrome c reductase complex (complex III or cytochrome b-c1 complex) that is part of the mitochondrial respiratory chain. The b-c1 complex mediates electron transfer from ubiquinol to cytochrome c. Contributes to the generation of a proton gradient across the mitochondrial membrane that is then used for ATP synthesis. In Neocyttus rhomboidalis (Spiky oreo dory), this protein is Cytochrome b (mt-cyb).